The following is a 559-amino-acid chain: MSGRRGDHPGRMAPTPGRRTRNGSVNGHPGMANYPPDDANYRRSRRPPPMPSANRYLPPLGEQPEPERSRVPPRTTRAGERITVTRAAAMRSREMGSRMYLLVHRAATADGADKSGLTALTWPVMANFAVDSAMAVALANTLFFAAASGESKSRVALYLLITIAPFAVIAPLIGPALDRLQHGRRVALALSFGLRTALAVVLIMNYDGATGSFPSWVLYPCALAMMVFSKSFSVLRSAVTPRVMPPTIDLVRVNSRLTVFGLLGGTIAGGAIAAGVEFVCTHLFQLPGALFVVVAITIAGASLSMRIPRWVEVTSGEVPATLSYHRDRGRLRRRWPEEVKNLGGTLRQPLGRNIITSLWGNCTIKVMVGFLFLYPAFVAKAHEANGWVQLGMLGLIGAAAAVGNFAGNFTSARLQLGRPAVLVVRCTVLVTVLAIAAAVAGSLAATAIATLITAGSSAIAKASLDASLQHDLPEESRASGFGRSESTLQLAWVLGGAVGVLVYTELWVGFTAVSALLILGLAQTIVSFRGDSLIPGLGGNRPVMAEQETTRRGAAVAPQ.

Residues 1 to 10 show a composition bias toward basic and acidic residues; it reads MSGRRGDHPG. The segment at 1 to 76 is disordered; that stretch reads MSGRRGDHPG…ERSRVPPRTT (76 aa). 11 helical membrane-spanning segments follow: residues 128 to 148, 155 to 175, 186 to 206, 208 to 228, 259 to 279, 283 to 303, 358 to 378, 387 to 407, 428 to 448, 490 to 510, and 515 to 535; these read FAVDSAMAVALANTLFFAAAS, VALYLLITIAPFAVIAPLIGP, VALALSFGLRTALAVVLIMNY, GATGSFPSWVLYPCALAMMVF, VFGLLGGTIAGGAIAAGVEFV, LFQLPGALFVVVAITIAGASL, LWGNCTIKVMVGFLFLYPAFV, WVQLGMLGLIGAAAAVGNFAG, VLVTVLAIAAAVAGSLAATAI, LAWVLGGAVGVLVYTELWVGF, and ALLILGLAQTIVSFRGDSLIP.

To M.leprae ML2143.

Its subcellular location is the cell membrane. This is an uncharacterized protein from Mycobacterium tuberculosis (strain CDC 1551 / Oshkosh).